A 497-amino-acid polypeptide reads, in one-letter code: Ectonucleoside triphosphate diphosphohydrolase 8 (497 aa).

Residues 1–8 lie on the Cytoplasmic side of the membrane; it reads MGLSWKER. The chain crosses the membrane as a helical span at residues 9–29; it reads VFMALLGVAAASGLTMLVLIL. The Extracellular segment spans residues 30-473; that stretch reads VKAINVLLPA…AQSYSIWTAG (444 aa). A disulfide bridge connects residues Cys-78 and Cys-102. Glu-168 acts as the Proton acceptor in catalysis. A disulfide bond links Cys-245 and Cys-294. The N-linked (GlcNAc...) asparagine glycan is linked to Asn-306. A disulfide bridge links Cys-331 with Cys-337. A glycan (N-linked (GlcNAc...) asparagine) is linked at Asn-365. A disulfide bridge connects residues Cys-383 and Cys-405. Residues 474–494 traverse the membrane as a helical segment; it reads VVFAVLTLVAILGAAAIQIFW. Residues 495-497 lie on the Cytoplasmic side of the membrane; sequence TQD.

This sequence belongs to the GDA1/CD39 NTPase family. Ca(2+) is required as a cofactor. Requires Mg(2+) as cofactor. In terms of processing, N-glycosylated. As to expression, expressed in liver, jejunum and kidney.

It localises to the cell membrane. The catalysed reaction is a ribonucleoside 5'-triphosphate + 2 H2O = a ribonucleoside 5'-phosphate + 2 phosphate + 2 H(+). In terms of biological role, canalicular ectonucleoside NTPDase responsible for the main hepatic NTPDase activity. Ectonucleoside NTPDases catalyze the hydrolysis of gamma- and beta-phosphate residues of nucleotides, playing a central role in concentration of extracellular nucleotides. Has activity toward ATP, ADP, UTP and UDP, but not toward AMP. The polypeptide is Ectonucleoside triphosphate diphosphohydrolase 8 (Entpd8) (Mus musculus (Mouse)).